A 147-amino-acid polypeptide reads, in one-letter code: Protein-export protein SecB (147 aa).

This sequence belongs to the SecB family. Homotetramer, a dimer of dimers. One homotetramer interacts with 1 SecA dimer.

It localises to the cytoplasm. Functionally, one of the proteins required for the normal export of preproteins out of the cell cytoplasm. It is a molecular chaperone that binds to a subset of precursor proteins, maintaining them in a translocation-competent state. It also specifically binds to its receptor SecA. This Neisseria meningitidis serogroup B (strain ATCC BAA-335 / MC58) protein is Protein-export protein SecB.